The following is a 438-amino-acid chain: 23S rRNA (uracil(1939)-C(5))-methyltransferase RlmD (438 aa).

The region spanning 10–69 (KASVNTKHLSVDVVRLDHNSAGIAFVDKKPVFIEGALPEEQAIIQFIEQKKQYSRAKLIK) is the TRAM domain. [4Fe-4S] cluster contacts are provided by C82, C88, C91, and C169. Residues Q272, F301, N306, E322, N349, and D370 each coordinate S-adenosyl-L-methionine. Catalysis depends on C396, which acts as the Nucleophile.

The protein belongs to the class I-like SAM-binding methyltransferase superfamily. RNA M5U methyltransferase family. RlmD subfamily.

It carries out the reaction uridine(1939) in 23S rRNA + S-adenosyl-L-methionine = 5-methyluridine(1939) in 23S rRNA + S-adenosyl-L-homocysteine + H(+). Functionally, catalyzes the formation of 5-methyl-uridine at position 1939 (m5U1939) in 23S rRNA. In Aliivibrio salmonicida (strain LFI1238) (Vibrio salmonicida (strain LFI1238)), this protein is 23S rRNA (uracil(1939)-C(5))-methyltransferase RlmD.